The chain runs to 436 residues: Probable D-serine dehydratase (436 aa).

Lys111 is modified (N6-(pyridoxal phosphate)lysine).

This sequence belongs to the serine/threonine dehydratase family. DsdA subfamily. The cofactor is pyridoxal 5'-phosphate.

It carries out the reaction D-serine = pyruvate + NH4(+). In Lactiplantibacillus plantarum (strain ATCC BAA-793 / NCIMB 8826 / WCFS1) (Lactobacillus plantarum), this protein is Probable D-serine dehydratase.